A 1173-amino-acid polypeptide reads, in one-letter code: PR domain zinc finger protein 10 (1173 aa).

Residues 146-211 form a disordered region; the sequence is RLPPMEGADS…AEPPRPFDPN (66 aa). The span at 154–167 shows a compositional bias: polar residues; that stretch reads DSSTTINSLPSPNA. A compositionally biased stretch (acidic residues) spans 172 to 202; it reads KEDDDDDDDDDDDEEEEDDDGEDSDLDDWEA. In terms of domain architecture, SET spans 248–366; that stretch reads LPLVLYIDRF…PKQELKVWYA (119 aa). The N-terminal PR domain; essential for transcriptional activator activity stretch occupies residues 267–371; that stretch reads IPKRTQFGPL…KVWYAASYAE (105 aa). The C2H2-type 1 zinc-finger motif lies at 395–417; that stretch reads WPCYECNRRFMSSEQLQQHLNSH. The span at 430–447 shows a compositional bias: basic residues; it reads RGRTRTRRKFGPGRRPGR. The segment at 430–451 is disordered; it reads RGRTRTRRKFGPGRRPGRPPKF. C2H2-type zinc fingers lie at residues 559-581, 589-611, 617-639, 645-668, 673-695, 701-724, 756-779, 801-824, and 863-886; these read FKCL…LRFH, LTCD…MKFH, YSCI…VVVH, FSCP…RSFH, YQCT…MLRH, FLCS…QRMH, FKCR…SKRH, YYCQ…LKNH, and VCCP…RKKH. Residues 926–1153 are C-terminal glutamine-rich region; essential for transcriptional activator activity; the sequence is QAMTELSQTL…PASNSSQTTQ (228 aa). 2 disordered regions span residues 1014-1056 and 1125-1173; these read PTSG…ANSA and KKSS…ISKP. Positions 1150-1160 are enriched in low complexity; sequence QTTQYIITTTT. Positions 1161-1173 are enriched in polar residues; the sequence is NMNGSSEVHISKP.

Belongs to the class V-like SAM-binding methyltransferase superfamily.

It localises to the nucleus. Its function is as follows. Transcriptional activator, essential for early embryonic development and survival of embryonic stem cells (ESCs). Supports cell growth and survival during early development by transcriptionally activating the expression of the translation initiation factor EIF3B, to sustain global translation. Activates the transcription of FLNC. The polypeptide is PR domain zinc finger protein 10 (prdm10) (Xenopus tropicalis (Western clawed frog)).